The sequence spans 181 residues: Macro domain-containing protein in sno 5'region (181 aa).

The 172-residue stretch at 1–172 folds into the Macro domain; the sequence is MTTITLVQGD…TFARELGDAG (172 aa).

It belongs to the MacroD-type family.

The protein is Macro domain-containing protein in sno 5'region of Streptomyces nogalater.